The chain runs to 310 residues: Alpha/beta hydrolase domain-containing protein 17A (310 aa).

Catalysis depends on charge relay system residues serine 190, aspartate 255, and histidine 284. Serine 307 carries the phosphoserine modification.

This sequence belongs to the AB hydrolase superfamily. ABHD17 family. In terms of processing, palmitoylated on cysteine residues located in a cysteine cluster at the N-terminus which promotes membrane localization. Palmitoylation is required for post-synaptic localization and for depalmitoylating activity towards DLG4/PSD95.

It localises to the cell membrane. Its subcellular location is the endosome membrane. The protein localises to the cell projection. The protein resides in the dendritic spine. It is found in the postsynaptic density membrane. The enzyme catalyses S-hexadecanoyl-L-cysteinyl-[protein] + H2O = L-cysteinyl-[protein] + hexadecanoate + H(+). Hydrolyzes fatty acids from S-acylated cysteine residues in proteins. Has depalmitoylating activity towards NRAS. Has depalmitoylating activity towards DLG4/PSD95. May have depalmitoylating activity towards MAP6. The polypeptide is Alpha/beta hydrolase domain-containing protein 17A (Bos taurus (Bovine)).